Consider the following 119-residue polypeptide: Large ribosomal subunit protein uL18 (119 aa).

It belongs to the universal ribosomal protein uL18 family. Part of the 50S ribosomal subunit; part of the 5S rRNA/L5/L18/L25 subcomplex. Contacts the 5S and 23S rRNAs.

This is one of the proteins that bind and probably mediate the attachment of the 5S RNA into the large ribosomal subunit, where it forms part of the central protuberance. In Legionella pneumophila (strain Paris), this protein is Large ribosomal subunit protein uL18.